Consider the following 228-residue polypeptide: Protein K8.1 (228 aa).

A signal peptide spans 1–26; it reads MSSTQIRTEIPVALLILCLCLVACHA. N-linked (GlcNAc...) asparagine; by host glycosylation is found at asparagine 55, asparagine 60, asparagine 70, and asparagine 85. A disordered region spans residues 77 to 113; the sequence is GSPSSEYPNVSVSVEDTSASGSGEDAIDESGSGEEER. Over residues 78-97 the composition is skewed to polar residues; it reads SPSSEYPNVSVSVEDTSASG. Residues 197–217 traverse the membrane as a helical segment; sequence LYILWAVGLLLGLVLILYLCV.

It is found in the host membrane. This is Protein K8.1 (K8.1) from Human herpesvirus 8 type P (isolate GK18) (HHV-8).